The chain runs to 72 residues: MTSSAAAIRLGFEPFVNASPVELRTNWSDSDVQAVISATYRQVFGNEHLMLSERLTSAESLLASGNISVREF.

Residues 1-72 (MTSSAAAIRL…ASGNISVREF (72 aa)) enclose the PBS-linker domain.

The protein belongs to the phycobilisome linker protein family.

Its subcellular location is the cellular thylakoid membrane. Rod linker protein, associated with phycocyanin. Linker polypeptides determine the state of aggregation and the location of the disk-shaped phycobiliprotein units within the phycobilisome and modulate their spectroscopic properties in order to mediate a directed and optimal energy transfer. This chain is Phycobilisome 37.5 kDa linker polypeptide, phycocyanin-associated, rod (cpcH2), found in Pseudanabaena tenuis (strain PCC 7409).